Here is a 258-residue protein sequence, read N- to C-terminus: Phosphate import ATP-binding protein PstB (258 aa).

An ABC transporter domain is found at 13–253 (IEVENLNLWY…PKEQSTEDYI (241 aa)). Residue 45-52 (GPSGCGKS) participates in ATP binding.

Belongs to the ABC transporter superfamily. Phosphate importer (TC 3.A.1.7) family. In terms of assembly, the complex is composed of two ATP-binding proteins (PstB), two transmembrane proteins (PstC and PstA) and a solute-binding protein (PstS).

It localises to the cell membrane. The enzyme catalyses phosphate(out) + ATP + H2O = ADP + 2 phosphate(in) + H(+). Functionally, part of the ABC transporter complex PstSACB involved in phosphate import. Responsible for energy coupling to the transport system. The sequence is that of Phosphate import ATP-binding protein PstB from Methanosarcina acetivorans (strain ATCC 35395 / DSM 2834 / JCM 12185 / C2A).